A 305-amino-acid chain; its full sequence is Sodium/potassium-transporting ATPase subunit beta-1 (305 aa).

The Cytoplasmic portion of the chain corresponds to 1-32; it reads MAREKSTDDGGGWKKFLWDSEKKQVLGRTGTS. A helical; Signal-anchor for type II membrane protein membrane pass occupies residues 33–53; sequence WFKIFVFYLIFYGCLAGIFIG. Topologically, residues 54 to 305 are extracellular; that stretch reads TIQVMLLTIS…RFEVKIEVKS (252 aa). Asparagine 114 carries an N-linked (GlcNAc...) asparagine glycan. A disulfide bridge connects residues cysteine 127 and cysteine 150. N-linked (GlcNAc...) asparagine glycosylation occurs at asparagine 159. A disulfide bridge connects residues cysteine 160 and cysteine 176. N-linked (GlcNAc...) asparagine glycans are attached at residues asparagine 194 and asparagine 267. Cysteine 215 and cysteine 278 are joined by a disulfide.

It belongs to the X(+)/potassium ATPases subunit beta family. The sodium/potassium-transporting ATPase is composed of a catalytic alpha subunit, an auxiliary non-catalytic beta subunit and an additional regulatory subunit.

The protein resides in the cell membrane. Functionally, this is the non-catalytic component of the active enzyme, which catalyzes the hydrolysis of ATP coupled with the exchange of Na(+) and K(+) ions across the plasma membrane. The beta subunit regulates, through assembly of alpha/beta heterodimers, the number of sodium pumps transported to the plasma membrane. The sequence is that of Sodium/potassium-transporting ATPase subunit beta-1 (atp1b1) from Tetronarce californica (Pacific electric ray).